Here is a 105-residue protein sequence, read N- to C-terminus: Insulin-like peptide 7 (105 aa).

The first 18 residues, 1 to 18, serve as a signal peptide directing secretion; the sequence is MPPIILVFFLVLIPASQQ. A propeptide spanning residues 19–57 is cleaved from the precursor; it reads YPFSLESLNDQIINEEVIEYMLENSIRSSRTRRVPDEKK. Intrachain disulfides connect C61–C90, C73–C103, C77–C104, and C89–C94.

It belongs to the insulin family.

The protein localises to the secreted. Insulin-like peptide which plays a role in ageing as a consequence of daf-16 activity. This Caenorhabditis elegans protein is Insulin-like peptide 7.